Reading from the N-terminus, the 98-residue chain is ESAT-6-like protein EsxW (98 aa).

Belongs to the WXG100 family. CFP-10 subfamily. In terms of assembly, forms a tight 1:1 complex with EsxV. The complex is destabilized at low pH. Unfolding of the proteins is required for dissociation of the complex and membrane binding.

It is found in the secreted. In Mycobacterium tuberculosis (strain ATCC 25618 / H37Rv), this protein is ESAT-6-like protein EsxW.